Reading from the N-terminus, the 702-residue chain is Epsin-1 (702 aa).

One can recognise an ENTH domain in the interval 10–142; the sequence is NFSKGYTDTQ…EDEHALKEAR (133 aa). Basic and acidic residues-rich tracts occupy residues 136–160 and 183–192; these read HALK…SSRF and SRYDDDDRDH. A disordered region spans residues 136 to 285; the sequence is HALKEARGDS…HQREREQQEQ (150 aa). Positions 193–214 are enriched in basic residues; the sequence is RSRRRSRSRRPGRSRSRRRSRR. Phosphoserine occurs at positions 212, 216, 218, and 223. UIM domains lie at 226–245 and 254–273; these read ENDP…AEED and DSEA…DEAR. Residues 230–248 are compositionally biased toward basic and acidic residues; sequence ELQRVIEESKRQAEEDAKR. S255 bears the Phosphoserine mark. Residues 266–283 show a composition bias toward basic and acidic residues; that stretch reads SKEEDEARQRHQREREQQ. A Phosphothreonine modification is found at T406. 2 disordered regions span residues 504-589 and 683-702; these read NHTG…RTGD and PMQG…LIDL. Residues 514 to 534 show a composition bias toward polar residues; it reads TGLQRQTTGYTGNNNPYSRPL. The segment covering 535-549 has biased composition (low complexity); that stretch reads QSQSTGILQQQQQQS. The segment covering 557-577 has biased composition (polar residues); sequence KTGSNNPFAQFSNLPSQSTAP. Low complexity predominate over residues 683-695; the sequence is PMQGMQQQSMQPQ.

It belongs to the epsin family.

It is found in the cytoplasm. Its subcellular location is the membrane. In terms of biological role, binds to membranes enriched in phosphatidylinositol 3,5-bisphosphate (PtdIns(3,5)P2) and phosphatidylinositol 4,5-bisphosphate (PtdIns(4,5)P2). Required for endocytosis and localization of actin. The sequence is that of Epsin-1 (ent1) from Schizosaccharomyces pombe (strain 972 / ATCC 24843) (Fission yeast).